Here is a 662-residue protein sequence, read N- to C-terminus: Fructose-1,6-bisphosphatase class 3 (662 aa).

This sequence belongs to the FBPase class 3 family. Requires Mn(2+) as cofactor.

The catalysed reaction is beta-D-fructose 1,6-bisphosphate + H2O = beta-D-fructose 6-phosphate + phosphate. It participates in carbohydrate biosynthesis; gluconeogenesis. The protein is Fructose-1,6-bisphosphatase class 3 of Clostridium tetani (strain Massachusetts / E88).